A 404-amino-acid chain; its full sequence is Argininosuccinate synthase (404 aa).

Residues 10–18 and Ala-37 contribute to the ATP site; that span reads AYSGGLDTS. L-citrulline is bound by residues Tyr-89 and Ser-94. Residue Gly-119 coordinates ATP. Residues Thr-121, Asn-125, and Asp-126 each coordinate L-aspartate. Asn-125 is an L-citrulline binding site. The L-citrulline site is built by Arg-129, Ser-178, Ser-187, Glu-263, and Tyr-275.

It belongs to the argininosuccinate synthase family. Type 1 subfamily. Homotetramer.

The protein localises to the cytoplasm. It carries out the reaction L-citrulline + L-aspartate + ATP = 2-(N(omega)-L-arginino)succinate + AMP + diphosphate + H(+). It functions in the pathway amino-acid biosynthesis; L-arginine biosynthesis; L-arginine from L-ornithine and carbamoyl phosphate: step 2/3. In Photobacterium profundum (strain SS9), this protein is Argininosuccinate synthase.